The sequence spans 734 residues: Photosystem I P700 chlorophyll a apoprotein A2 (734 aa).

Helical transmembrane passes span 46-69 (IFAS…FHVA), 135-158 (LYSG…LHLQ), 175-199 (LNHH…HVAI), 273-291 (MAHH…GHMY), 330-353 (IHFQ…QHMY), 369-395 (AALY…IFFI), 417-439 (AIIS…LYVH), and 517-535 (FLVH…LILV). C559 and C568 together coordinate [4Fe-4S] cluster. Helical transmembrane passes span 575 to 596 (AFYL…YWHW) and 643 to 665 (LSVW…MFLI). Residues H654, M662, and Y670 each coordinate chlorophyll a. Position 671 (W671) interacts with phylloquinone. The chain crosses the membrane as a helical span at residues 707 to 727 (LVGLAHFSVGYIFTYAAFLIA).

This sequence belongs to the PsaA/PsaB family. In terms of assembly, the PsaA/B heterodimer binds the P700 chlorophyll special pair and subsequent electron acceptors. PSI consists of a core antenna complex that captures photons, and an electron transfer chain that converts photonic excitation into a charge separation. The eukaryotic PSI reaction center is composed of at least 11 subunits. P700 is a chlorophyll a/chlorophyll a' dimer, A0 is one or more chlorophyll a, A1 is one or both phylloquinones and FX is a shared 4Fe-4S iron-sulfur center. is required as a cofactor.

Its subcellular location is the plastid. The protein localises to the chloroplast thylakoid membrane. The enzyme catalyses reduced [plastocyanin] + hnu + oxidized [2Fe-2S]-[ferredoxin] = oxidized [plastocyanin] + reduced [2Fe-2S]-[ferredoxin]. In terms of biological role, psaA and PsaB bind P700, the primary electron donor of photosystem I (PSI), as well as the electron acceptors A0, A1 and FX. PSI is a plastocyanin-ferredoxin oxidoreductase, converting photonic excitation into a charge separation, which transfers an electron from the donor P700 chlorophyll pair to the spectroscopically characterized acceptors A0, A1, FX, FA and FB in turn. Oxidized P700 is reduced on the lumenal side of the thylakoid membrane by plastocyanin. The polypeptide is Photosystem I P700 chlorophyll a apoprotein A2 (Lotus japonicus (Lotus corniculatus var. japonicus)).